A 524-amino-acid polypeptide reads, in one-letter code: Ankyrin repeat-containing protein At5g02620 (524 aa).

ANK repeat units follow at residues R16–L45, S55–A84, N90–F119, S124–A153, N158–T187, K192–S222, K226–V255, and S260–R289. Transmembrane regions (helical) follow at residues A349 to F369, F399 to V419, L441 to V461, and V472 to I492. S508 bears the Phosphoserine mark.

The protein resides in the membrane. The polypeptide is Ankyrin repeat-containing protein At5g02620 (Arabidopsis thaliana (Mouse-ear cress)).